Reading from the N-terminus, the 220-residue chain is Protein DGCR6 (220 aa).

Residues 76-142 (KSLYNQRLRL…EQRAMDQKIV (67 aa)) are a coiled coil.

The protein belongs to the gonadal family. In terms of tissue distribution, found in all tissues examined with highest expression in liver, heart and skeletal muscle. Lower levels in pancreas and placenta. Weak expression in brain.

The protein resides in the nucleus. Functionally, may play a role in neural crest cell migration into the third and fourth pharyngeal pouches. The polypeptide is Protein DGCR6 (DGCR6) (Homo sapiens (Human)).